The following is a 359-amino-acid chain: Photosystem II protein D1 1 (359 aa).

3 helical membrane-spanning segments follow: residues 29-46 (YVGW…AATT), 118-133 (HFLI…EWEL), and 142-156 (WICV…AASA). A chlorophyll a-binding site is contributed by histidine 118. Position 126 (tyrosine 126) interacts with pheophytin a. Aspartate 170 and glutamate 189 together coordinate [CaMn4O5] cluster. Residues 197 to 218 (FHMMGVAGVFGGSLFSAMHGSL) form a helical membrane-spanning segment. Histidine 198 is a binding site for chlorophyll a. Residues histidine 215 and 264–265 (SF) contribute to the a quinone site. Histidine 215 contributes to the Fe cation binding site. Histidine 272 is a binding site for Fe cation. The helical transmembrane segment at 274-288 (FLAAWPVVGIWFTAL) threads the bilayer. Histidine 332, glutamate 333, aspartate 342, and alanine 344 together coordinate [CaMn4O5] cluster. Positions 345-359 (AAESTPVALQAPAIG) are excised as a propeptide.

It belongs to the reaction center PufL/M/PsbA/D family. In terms of assembly, PSII is composed of 1 copy each of membrane proteins PsbA, PsbB, PsbC, PsbD, PsbE, PsbF, PsbH, PsbI, PsbJ, PsbK, PsbL, PsbM, PsbT, PsbX, PsbY, PsbZ, Psb30/Ycf12, peripheral proteins PsbO, CyanoQ (PsbQ), PsbU, PsbV and a large number of cofactors. It forms dimeric complexes. Requires The D1/D2 heterodimer binds P680, chlorophylls that are the primary electron donor of PSII, and subsequent electron acceptors. It shares a non-heme iron and each subunit binds pheophytin, quinone, additional chlorophylls, carotenoids and lipids. D1 provides most of the ligands for the Mn4-Ca-O5 cluster of the oxygen-evolving complex (OEC). There is also a Cl(-1) ion associated with D1 and D2, which is required for oxygen evolution. The PSII complex binds additional chlorophylls, carotenoids and specific lipids. as cofactor. In terms of processing, tyr-161 forms a radical intermediate that is referred to as redox-active TyrZ, YZ or Y-Z. Post-translationally, C-terminally processed by CtpA; processing is essential to allow assembly of the oxygen-evolving complex and thus photosynthetic growth.

It localises to the cellular thylakoid membrane. It catalyses the reaction 2 a plastoquinone + 4 hnu + 2 H2O = 2 a plastoquinol + O2. Functionally, photosystem II (PSII) is a light-driven water:plastoquinone oxidoreductase that uses light energy to abstract electrons from H(2)O, generating O(2) and a proton gradient subsequently used for ATP formation. It consists of a core antenna complex that captures photons, and an electron transfer chain that converts photonic excitation into a charge separation. The D1/D2 (PsbA/PsbD) reaction center heterodimer binds P680, the primary electron donor of PSII as well as several subsequent electron acceptors. The sequence is that of Photosystem II protein D1 1 from Synechococcus sp. (strain WH7803).